Here is an 880-residue protein sequence, read N- to C-terminus: Pentatricopeptide repeat-containing protein At3g07290, mitochondrial (880 aa).

Residues 1 to 89 (MLLIHIRSTR…RSDNDICVRF (89 aa)) constitute a mitochondrion transit peptide. 19 PPR repeats span residues 159–193 (NYPC…GFVV), 194–228 (GMID…GFVL), 229–259 (DSHI…MSKE), 265–299 (NSVS…GCQP), 300–334 (STRT…GCKP), 335–369 (NVHT…RIFP), 370–404 (SVIT…ACKP), 405–439 (NVRT…GLSP), 440–474 (DIVS…DIEP), 475–509 (DCLT…GISL), 510–544 (DEVT…RILT), 545–579 (TPHS…GLVP), 580–614 (SVVT…GCLP), 615–649 (NVYP…GVSP), 650–684 (NHVT…GYEL), 685–721 (NDRI…ETDP), 738–768 (ISGL…VLER), 772–806 (LEKA…GFVP), and 807–842 (SFKS…GVVE).

This sequence belongs to the PPR family. P subfamily.

The protein resides in the mitochondrion. The protein is Pentatricopeptide repeat-containing protein At3g07290, mitochondrial of Arabidopsis thaliana (Mouse-ear cress).